The sequence spans 303 residues: Cobalamin biosynthesis protein CobD (303 aa).

A run of 4 helical transmembrane segments spans residues 65-85, 147-167, 235-255, and 283-303; these read LLAWLLSLLPGIGWLAEIVLL, DAVFAALFWFIVAGAPGVVLY, AGPVMAAGAGALGVVLGGAAI, and LVWAGVGVWLLVLLFGGWLYA.

This sequence belongs to the CobD/CbiB family.

Its subcellular location is the cell membrane. Its pathway is cofactor biosynthesis; adenosylcobalamin biosynthesis. Its function is as follows. Converts cobyric acid to cobinamide by the addition of aminopropanol on the F carboxylic group. The polypeptide is Cobalamin biosynthesis protein CobD (Stutzerimonas stutzeri (strain A1501) (Pseudomonas stutzeri)).